The following is a 434-amino-acid chain: Putative nuclease OPG089 (434 aa).

Belongs to the XPG/RAD2 endonuclease family. FEN1 subfamily. It depends on Mg(2+) as a cofactor.

Its subcellular location is the virion. Its function is as follows. Putative nuclease that seems to be required for double-strand break repair, homologous recombination, and production of full-length viral genomic DNA. The polypeptide is Putative nuclease OPG089 (OPG089) (Monkeypox virus).